A 209-amino-acid polypeptide reads, in one-letter code: Guanylate kinase (209 aa).

One can recognise a Guanylate kinase-like domain in the interval 5–184; the sequence is GLLIVFSGPS…AAERVKRVIE (180 aa). 12 to 19 serves as a coordination point for ATP; that stretch reads GPSGVGKG.

Belongs to the guanylate kinase family.

It localises to the cytoplasm. It catalyses the reaction GMP + ATP = GDP + ADP. Its function is as follows. Essential for recycling GMP and indirectly, cGMP. The chain is Guanylate kinase from Streptococcus agalactiae serotype Ia (strain ATCC 27591 / A909 / CDC SS700).